The following is a 353-amino-acid chain: Deoxyribonuclease-2-alpha (353 aa).

Residues 1–19 form the signal peptide; sequence MATLRSLLLAALLWVPAEA. Cys22 and Cys161 are oxidised to a cystine. N-linked (GlcNAc...) asparagine glycosylation is found at Asn71, Asn88, Asn214, and Asn268. 2 cysteine pairs are disulfide-bonded: Cys269-Cys349 and Cys310-Cys329. His297 is an active-site residue.

Belongs to the DNase II family. Highly expressed in fetal liver macrophages.

The protein localises to the lysosome. The catalysed reaction is Endonucleolytic cleavage to nucleoside 3'-phosphates and 3'-phosphooligonucleotide end-products.. Hydrolyzes DNA under acidic conditions with a preference for double-stranded DNA. Plays a major role in the clearance of nucleic acids generated through apoptosis, hence preventing autoinflammation. Necessary for proper fetal development and for definitive erythropoiesis in fetal liver and bone marrow, where it degrades nuclear DNA expelled from erythroid precursor cells. This chain is Deoxyribonuclease-2-alpha (Dnase2), found in Mus musculus (Mouse).